Reading from the N-terminus, the 337-residue chain is Thymidylate synthase (337 aa).

DUMP-binding positions include R74 and 199 to 200 (RR). The active-site Nucleophile is C219. DUMP-binding positions include 239-242 (RSGD), N250, and 280-282 (HIY). D242 contacts (6R)-5,10-methylene-5,6,7,8-tetrahydrofolate. Residue A336 participates in (6R)-5,10-methylene-5,6,7,8-tetrahydrofolate binding.

This sequence belongs to the thymidylate synthase family. In terms of assembly, homodimer.

It carries out the reaction dUMP + (6R)-5,10-methylene-5,6,7,8-tetrahydrofolate = 7,8-dihydrofolate + dTMP. It participates in pyrimidine metabolism; dTTP biosynthesis. This chain is Thymidylate synthase (70), found in Homo sapiens (Human).